We begin with the raw amino-acid sequence, 833 residues long: Major vault protein (833 aa).

MVP repeat units follow at residues 10-52 (RYYY…VSVP), 54-115 (RHYC…RKLQ), 119-170 (PNTG…TVIY), 171-223 (PNTA…TMLS), 224-278 (ELKA…VSLN), 280-328 (KEYV…LVVG), 329-380 (KEEA…MALD), and 381-433 (RNEG…SIKT).

As to quaternary structure, the vault ribonucleoprotein particle is a huge (400 A x 670 A) cage structure of 12.9 MDa. It consists of a dimer of half-vaults, with each half-vault comprising 39 identical major vault protein (MVP) chains, PARP4 and one or more vault RNAs (vRNAs).

It localises to the cytoplasm. It is found in the nucleus. In terms of biological role, required for normal vault structure. Vaults are multi-subunit structures that may act as scaffolds for proteins involved in signal transduction. Vaults may also play a role in nucleo-cytoplasmic transport. The protein is Major vault protein of Leishmania braziliensis.